We begin with the raw amino-acid sequence, 208 residues long: Rac-like GTP-binding protein ARAC8 (208 aa).

GTP is bound at residue 15 to 22 (GDGAVGKT). The Effector region motif lies at 37–45 (YIPTVFDNF). Residues 62-66 (DTAGQ) and 120-123 (TKMD) each bind GTP. S-palmitoyl cysteine attachment occurs at residues Cys199 and Cys205.

It belongs to the small GTPase superfamily. Rho family. Interacts with ICR1. Binds to SPK1. Post-translationally, although this sequence has a C-terminal -CXXX, it is palmitoylated at Cys-205, rather than prenylated.

The protein resides in the membrane. In terms of biological role, acts as a negative regulator of abscisic acid (ABA) responses. The polypeptide is Rac-like GTP-binding protein ARAC8 (ARAC8) (Arabidopsis thaliana (Mouse-ear cress)).